Reading from the N-terminus, the 61-residue chain is Large ribosomal subunit protein eL37 (61 aa).

Residues cysteine 20, cysteine 23, cysteine 35, and cysteine 38 each coordinate Zn(2+). The C4-type zinc finger occupies 20–38 (CRRCGRRAYHVRKKRCAAC).

This sequence belongs to the eukaryotic ribosomal protein eL37 family. It depends on Zn(2+) as a cofactor.

Binds to the 23S rRNA. This is Large ribosomal subunit protein eL37 (rpl37e) from Methanocaldococcus jannaschii (strain ATCC 43067 / DSM 2661 / JAL-1 / JCM 10045 / NBRC 100440) (Methanococcus jannaschii).